A 473-amino-acid chain; its full sequence is Tryptophanase (473 aa).

At lysine 270 the chain carries N6-(pyridoxal phosphate)lysine.

It belongs to the beta-eliminating lyase family. Homotetramer. Requires pyridoxal 5'-phosphate as cofactor.

It carries out the reaction L-tryptophan + H2O = indole + pyruvate + NH4(+). Its pathway is amino-acid degradation; L-tryptophan degradation via pyruvate pathway; indole and pyruvate from L-tryptophan: step 1/1. The chain is Tryptophanase from Vibrio vulnificus (strain CMCP6).